A 419-amino-acid polypeptide reads, in one-letter code: GTPase Obg (419 aa).

Positions 1–156 (MFIDKVNTYL…AEVNLELRLI (156 aa)) constitute an Obg domain. Positions 157–325 (ADVGLLGLPN…LLKEMLRMLE (169 aa)) constitute an OBG-type G domain. Residues 163-170 (GLPNAGKS), 188-192 (FTTLA), 209-212 (DIPG), 279-282 (NKID), and 306-308 (SAA) each bind GTP. The Mg(2+) site is built by serine 170 and threonine 190. The OCT domain occupies 342-419 (KKYIYEPEFK…IGDFEFTFEK (78 aa)).

The protein belongs to the TRAFAC class OBG-HflX-like GTPase superfamily. OBG GTPase family. Monomer. Mg(2+) serves as cofactor.

It is found in the cytoplasm. Functionally, an essential GTPase which binds GTP, GDP and possibly (p)ppGpp with moderate affinity, with high nucleotide exchange rates and a fairly low GTP hydrolysis rate. Plays a role in control of the cell cycle, stress response, ribosome biogenesis and in those bacteria that undergo differentiation, in morphogenesis control. The polypeptide is GTPase Obg (Endomicrobium trichonymphae).